Reading from the N-terminus, the 500-residue chain is Aspartyl/glutamyl-tRNA(Asn/Gln) amidotransferase subunit B (500 aa).

This sequence belongs to the GatB/GatE family. GatB subfamily. As to quaternary structure, heterotrimer of A, B and C subunits.

The enzyme catalyses L-glutamyl-tRNA(Gln) + L-glutamine + ATP + H2O = L-glutaminyl-tRNA(Gln) + L-glutamate + ADP + phosphate + H(+). The catalysed reaction is L-aspartyl-tRNA(Asn) + L-glutamine + ATP + H2O = L-asparaginyl-tRNA(Asn) + L-glutamate + ADP + phosphate + 2 H(+). In terms of biological role, allows the formation of correctly charged Asn-tRNA(Asn) or Gln-tRNA(Gln) through the transamidation of misacylated Asp-tRNA(Asn) or Glu-tRNA(Gln) in organisms which lack either or both of asparaginyl-tRNA or glutaminyl-tRNA synthetases. The reaction takes place in the presence of glutamine and ATP through an activated phospho-Asp-tRNA(Asn) or phospho-Glu-tRNA(Gln). The sequence is that of Aspartyl/glutamyl-tRNA(Asn/Gln) amidotransferase subunit B from Rhizobium etli (strain CIAT 652).